Here is a 1245-residue protein sequence, read N- to C-terminus: MGNTKWTDEQLSAIETRNCNLLVAAAAGSGKTAVLVERIIRIITNEENPVDIDKLLVVTFTNAAAAEMRERIADAISKELENNPRSKNLQRQLTLLNRANITTMHSFCLDVIKNNYHRIDLDPSFRIGDQTEGILIKSEVIEELFEDKYEEEDIGFTNLVEIFSSYKNDNNLKNLVLDLYNFTMSGPWPEKWLINSAEAFNIKQLDELDRTNWVRVLAQSVKIELDGYVKMLEKAIEVTSKTDGLEPYMDNLLMELSYIKKAYESTDNGLEAMFNSLSSVQFSRLKSIKKDKVSDELSQNTVKKIRDDVKKGISELLNNAYSVNPQQMLRNIQGSYPYIKKLIELVLEFSARFSKRKRERNILDFNDLEHLCLKILSDYDDENNIIPSSIAMNFKEYFDEVLVDEYQDSNNVQETIINLVSRKNDDNPNVFMVGDVKQSIYRFRQAKPELFIEKYNTYDSSNGVNRKIQLYKNFRSRREIIDGVNYIFKEVMSEVVGELEYTDEEALNLGADFKENKFKDTIVGGPIEVNIIDKSHNETVVEDNEEQEEINNVILEGRIVAKRIKELMSKSEDEQIFKVLDKESGEYRPLKYRDIVILLRATKNWSEPLLDELSAEGIPVYADTGSGYFESIEIRTIISLLKVVDNPMQDIPVISVMRSPIMGFSAEEISDIRLVKKDNYFYENIKYISEEAYNSINESYSDVLIAKCKYFINSVDKWRNKSIYMAIDEFIWYLYMDTAYYGYVGAMPNGVLRQANLKILFQRARQFEKTSFKGLFNFINFINKLIKSSGDMGSAQVLGENEDVVRIMSIHKSKGLEFPVVFLCGLGKNFNLMDLNKSILYHDELGLGPDFIDIGKRFSIGTLAKESIKKKMKFETLSEEMRILYVACTRAKEKLIMTGTVGNLEKSAEKWLGSASLDYNRISPSEVLKGKSYLDWICMSLCQHRDGSVLSESFGTENLILKDDNSRWKVSFWNKGDLIDKTKTEVLEQGEGYELTIINNKPYDNYLYEEVDKILSYKYPFKASTTIKSNISVSDLKRRHAEEDYDTEQLYREKVKVVPKFLQEKKGLTPSEKGTAVHFVMKKIDFNRVSSTEEIKEQLHELFEKEFLLSEELKVINPTKILSFFRSDLGKKILDLNCRGEKIYREIPFYTEISSLEVDKTLDNIYKDEKIRLQGIIDCFFEYKGDIILIDYKTDYIMEGHEDEFKEKYRKQLDYYSDAIFKLTGKKVKYKYLYSFYLEKEIKII.

One can recognise a UvrD-like helicase ATP-binding domain in the interval 4-477; it reads TKWTDEQLSA…IQLYKNFRSR (474 aa). ATP is bound at residue 25–32; that stretch reads AAAGSGKT. The 299-residue stretch at 517–815 folds into the UvrD-like helicase C-terminal domain; sequence KFKDTIVGGP…RIMSIHKSKG (299 aa).

It belongs to the helicase family. AddA subfamily. In terms of assembly, heterodimer of AddA and AddB/RexB. Requires Mg(2+) as cofactor.

It catalyses the reaction Couples ATP hydrolysis with the unwinding of duplex DNA by translocating in the 3'-5' direction.. The enzyme catalyses ATP + H2O = ADP + phosphate + H(+). The heterodimer acts as both an ATP-dependent DNA helicase and an ATP-dependent, dual-direction single-stranded exonuclease. Recognizes the chi site generating a DNA molecule suitable for the initiation of homologous recombination. The AddA nuclease domain is required for chi fragment generation; this subunit has the helicase and 3' -&gt; 5' nuclease activities. The sequence is that of ATP-dependent helicase/nuclease subunit A from Clostridium beijerinckii (strain ATCC 51743 / NCIMB 8052) (Clostridium acetobutylicum).